A 261-amino-acid polypeptide reads, in one-letter code: uncharacterized protein (261 aa).

The region spanning 135 to 261 (LVLKRIDEDI…VTEYTIYYSG (127 aa)) is the N-acetyltransferase domain.

Belongs to the acetyltransferase family.

This is an uncharacterized protein from Bacillus subtilis (strain 168).